The chain runs to 481 residues: Cobyric acid synthase (481 aa).

Residues 249 to 436 (GLHIVCLRLS…LHGMFRDDAF (188 aa)) form the GATase cobBQ-type domain. The active-site Nucleophile is the cysteine 331. Histidine 428 is an active-site residue.

Belongs to the CobB/CobQ family. CobQ subfamily.

Its pathway is cofactor biosynthesis; adenosylcobalamin biosynthesis. In terms of biological role, catalyzes amidations at positions B, D, E, and G on adenosylcobyrinic A,C-diamide. NH(2) groups are provided by glutamine, and one molecule of ATP is hydrogenolyzed for each amidation. This chain is Cobyric acid synthase, found in Jannaschia sp. (strain CCS1).